Here is a 119-residue protein sequence, read N- to C-terminus: Large ribosomal subunit protein bL20 (119 aa).

The protein belongs to the bacterial ribosomal protein bL20 family.

In terms of biological role, binds directly to 23S ribosomal RNA and is necessary for the in vitro assembly process of the 50S ribosomal subunit. It is not involved in the protein synthesizing functions of that subunit. The polypeptide is Large ribosomal subunit protein bL20 (Clostridium beijerinckii (strain ATCC 51743 / NCIMB 8052) (Clostridium acetobutylicum)).